The primary structure comprises 414 residues: Gamma-glutamyl phosphate reductase (414 aa).

It belongs to the gamma-glutamyl phosphate reductase family.

Its subcellular location is the cytoplasm. The enzyme catalyses L-glutamate 5-semialdehyde + phosphate + NADP(+) = L-glutamyl 5-phosphate + NADPH + H(+). The protein operates within amino-acid biosynthesis; L-proline biosynthesis; L-glutamate 5-semialdehyde from L-glutamate: step 2/2. In terms of biological role, catalyzes the NADPH-dependent reduction of L-glutamate 5-phosphate into L-glutamate 5-semialdehyde and phosphate. The product spontaneously undergoes cyclization to form 1-pyrroline-5-carboxylate. The polypeptide is Gamma-glutamyl phosphate reductase (Geobacillus kaustophilus (strain HTA426)).